We begin with the raw amino-acid sequence, 386 residues long: Succinate--CoA ligase [ADP-forming] subunit beta (386 aa).

The ATP-grasp domain maps to 9 to 244 (KEILRKYGVS…LDEEDPKEIE (236 aa)). ATP contacts are provided by residues Lys-46, 53 to 55 (GRG), Glu-99, Cys-102, and Glu-107. Mg(2+) contacts are provided by Asn-199 and Asp-213. Substrate-binding positions include Asn-264 and 321-323 (GIM).

The protein belongs to the succinate/malate CoA ligase beta subunit family. As to quaternary structure, heterotetramer of two alpha and two beta subunits. Mg(2+) is required as a cofactor.

It carries out the reaction succinate + ATP + CoA = succinyl-CoA + ADP + phosphate. It catalyses the reaction GTP + succinate + CoA = succinyl-CoA + GDP + phosphate. It participates in carbohydrate metabolism; tricarboxylic acid cycle; succinate from succinyl-CoA (ligase route): step 1/1. In terms of biological role, succinyl-CoA synthetase functions in the citric acid cycle (TCA), coupling the hydrolysis of succinyl-CoA to the synthesis of either ATP or GTP and thus represents the only step of substrate-level phosphorylation in the TCA. The beta subunit provides nucleotide specificity of the enzyme and binds the substrate succinate, while the binding sites for coenzyme A and phosphate are found in the alpha subunit. The chain is Succinate--CoA ligase [ADP-forming] subunit beta from Bacillus pumilus (strain SAFR-032).